The following is a 177-amino-acid chain: Phycocyanin PC645 beta subunit (177 aa).

Position 18 (Tyr-18) interacts with mesobiliverdin. Residues Lys-28, Asn-35, and Asp-39 each coordinate (2R,3E)-phycocyanobilin. The 15,16-dihydrobiliverdin site is built by Cys-50, Asp-54, and Cys-61. The (2R,3E)-phycocyanobilin site is built by Asn-72, Arg-77, Cys-82, Arg-84, and Asp-85. Gln-148 lines the 15,16-dihydrobiliverdin pocket. (2R,3E)-phycocyanobilin contacts are provided by Pro-154, Gly-156, and Cys-158.

This sequence belongs to the phycobiliprotein family. As to quaternary structure, heterotetramer of 2 different alpha chains and 2 identical beta chains which form 2 alpha-beta heterodimers within the heterotetramer. Post-translationally, contains two phycocyanobilin chromophores, one mesobiliverdin chromophore and one 15,16-dihydrobiliverdin chromophore with binding mediated by both the alpha and beta subunits.

It is found in the plastid. Its subcellular location is the chloroplast thylakoid membrane. Its function is as follows. Light-harvesting photosynthetic tetrapyrrole chromophore-protein from the phycobiliprotein complex. The chain is Phycocyanin PC645 beta subunit from Chroomonas sp. (strain CCMP270).